A 398-amino-acid chain; its full sequence is ATP-dependent (S)-NAD(P)H-hydrate dehydratase 1 (398 aa).

The YjeF C-terminal domain occupies 80 to 391 (LLRKAFQMIP…GYIGEAFELV (312 aa)). (6S)-NADPHX-binding positions include Gly-187 and 240 to 246 (NHVEFQR). ATP contacts are provided by residues 280–284 (KGSID) and 300–309 (GSPKRCGGQG). Asp-310 provides a ligand contact to (6S)-NADPHX.

The protein belongs to the NnrD/CARKD family. Mg(2+) serves as cofactor.

Its subcellular location is the cytoplasm. The catalysed reaction is (6S)-NADHX + ATP = ADP + phosphate + NADH + H(+). It carries out the reaction (6S)-NADPHX + ATP = ADP + phosphate + NADPH + H(+). Catalyzes the dehydration of the S-form of NAD(P)HX at the expense of ATP, which is converted to ADP. Together with NAD(P)HX epimerase, which catalyzes the epimerization of the S- and R-forms, the enzyme allows the repair of both epimers of NAD(P)HX, a damaged form of NAD(P)H that is a result of enzymatic or heat-dependent hydration. This Puccinia graminis f. sp. tritici (strain CRL 75-36-700-3 / race SCCL) (Black stem rust fungus) protein is ATP-dependent (S)-NAD(P)H-hydrate dehydratase 1.